The sequence spans 211 residues: Metalloproteinase inhibitor 3 (211 aa).

An N-terminal signal peptide occupies residues 1-23; that stretch reads MTPWLGLVVLLGSWSLGDWGAEA. Cys-24 provides a ligand contact to Zn(2+). Involved in metalloproteinase-binding stretches follow at residues 24 to 27 and 88 to 89; these read CTCS and ES. 6 cysteine pairs are disulfide-bonded: Cys-24–Cys-91, Cys-26–Cys-118, Cys-36–Cys-143, Cys-145–Cys-192, Cys-150–Cys-155, and Cys-163–Cys-184. Residues 24–143 form the NTR domain; the sequence is CTCSPSHPQD…GLNYRYHLGC (120 aa). Residues 105-188 form a mediates interaction with EFEMP1 region; sequence TGRVYDGKMY…SKHYACIRQK (84 aa). Asn-207 carries N-linked (GlcNAc...) asparagine glycosylation.

It belongs to the protease inhibitor I35 (TIMP) family. In terms of assembly, interacts with EFEMP1. Interacts with KDR.

It is found in the secreted. The protein resides in the extracellular space. The protein localises to the extracellular matrix. Functionally, mediates a variety of processes including matrix regulation and turnover, inflammation, and angiogenesis, through reversible inhibition of zinc protease superfamily enzymes, primarily matrix metalloproteinases (MMPs). Regulates extracellular matrix (ECM) remodeling through inhibition of matrix metalloproteinases (MMP) including MMP-1, MMP-2, MMP-3, MMP-7, MMP-9, MMP-13, MMP-14 and MMP-15. Additionally, modulates the processing of amyloid precursor protein (APP) and apolipoprotein E receptor ApoER2 by inhibiting two alpha-secretases ADAM10 and ADAM17. Functions as a tumor suppressor and a potent inhibitor of angiogenesis. Exerts its anti-angiogenic effect by directly interacting with vascular endothelial growth factor (VEGF) receptor-2/KDR, preventing its binding to the VEGFA ligand. Selectively induces apoptosis in angiogenic endothelial cells through a caspase-independent cell death pathway. Mechanistically, inhibits matrix-induced focal adhesion kinase PTK2 tyrosine phosphorylation and association with paxillin/PXN and disrupts the incorporation of ITGB3, PTK2 and PXN into focal adhesion contacts on the matrix. This Bos taurus (Bovine) protein is Metalloproteinase inhibitor 3 (TIMP3).